We begin with the raw amino-acid sequence, 473 residues long: UDP-glycosyltransferase 71B1 (473 aa).

His15 acts as the Proton acceptor in catalysis. An anthocyanidin is bound at residue His15. Asp110 (charge relay) is an active-site residue. The UDP-alpha-D-glucose site is built by Thr132, Ala342, Gln344, His359, Trp362, Asn363, Ser364, and Glu367. Ala382 is a binding site for an anthocyanidin. UDP-alpha-D-glucose is bound by residues Glu383 and Gln384.

This sequence belongs to the UDP-glycosyltransferase family.

It carries out the reaction a flavonol + UDP-alpha-D-glucose = a flavonol 3-O-beta-D-glucoside + UDP + H(+). Its function is as follows. Possesses quercetin 3-O-glucosyltransferase activity in vitro. Also active in vitro on benzoates and benzoate derivatives. This is UDP-glycosyltransferase 71B1 (UGT71B1) from Arabidopsis thaliana (Mouse-ear cress).